The chain runs to 121 residues: Putative iron-sulfur cluster insertion protein ErpA (121 aa).

3 residues coordinate iron-sulfur cluster: Cys49, Cys113, and Cys115.

Belongs to the HesB/IscA family. Homodimer. It depends on iron-sulfur cluster as a cofactor.

Functionally, required for insertion of 4Fe-4S clusters. This Verminephrobacter eiseniae (strain EF01-2) protein is Putative iron-sulfur cluster insertion protein ErpA.